A 545-amino-acid chain; its full sequence is 1,3-beta-glucanosyltransferase ARB_07487 (545 aa).

The signal sequence occupies residues 1–19 (MKFSSLAAATALVAGSVVA). 2 N-linked (GlcNAc...) asparagine glycosylation sites follow: asparagine 51 and asparagine 69. Cysteines 88 and 117 form a disulfide. Residues tyrosine 106, 133–141 (SEPSTSIIR), asparagine 174, and glutamate 175 each bind (1,3-beta-D-glucosyl)n. Glutamate 175 serves as the catalytic Proton donor. An N-linked (GlcNAc...) asparagine glycan is attached at asparagine 179. The (1,3-beta-D-glucosyl)n site is built by aspartate 216 and arginine 221. Intrachain disulfides connect cysteine 230-cysteine 363, cysteine 248-cysteine 279, cysteine 384-cysteine 437, cysteine 393-cysteine 464, and cysteine 412-cysteine 419. Glutamate 276 (nucleophile) is an active-site residue. Position 308 (tyrosine 308) interacts with (1,3-beta-D-glucosyl)n. The tract at residues 493 to 513 (GTGSVTSAPGSGGNKPDQGAA) is disordered. Alanine 512 carries GPI-anchor amidated alanine lipidation. Positions 513–545 (ASTISAPSVNLGIVKLGAYIFCAVLAGAGMILI) are cleaved as a propeptide — removed in mature form.

This sequence belongs to the glycosyl hydrolase 72 family. The GPI-anchor is attached to the protein in the endoplasmic reticulum and serves to target the protein to the cell surface. There, the glucosamine-inositol phospholipid moiety is cleaved off and the GPI-modified mannoprotein is covalently attached via its lipidless GPI glycan remnant to the 1,6-beta-glucan of the outer cell wall layer.

Its subcellular location is the secreted. The protein resides in the cell membrane. It localises to the cell wall. In terms of biological role, splits internally a 1,3-beta-glucan molecule and transfers the newly generated reducing end (the donor) to the non-reducing end of another 1,3-beta-glucan molecule (the acceptor) forming a 1,3-beta linkage, resulting in the elongation of 1,3-beta-glucan chains in the cell wall. Involved in cell wall biosynthesis and morphogenesis. The protein is 1,3-beta-glucanosyltransferase ARB_07487 of Arthroderma benhamiae (strain ATCC MYA-4681 / CBS 112371) (Trichophyton mentagrophytes).